Consider the following 158-residue polypeptide: Transcription elongation factor GreA (158 aa).

A coiled-coil region spans residues V14–N76.

The protein belongs to the GreA/GreB family.

Functionally, necessary for efficient RNA polymerase transcription elongation past template-encoded arresting sites. The arresting sites in DNA have the property of trapping a certain fraction of elongating RNA polymerases that pass through, resulting in locked ternary complexes. Cleavage of the nascent transcript by cleavage factors such as GreA or GreB allows the resumption of elongation from the new 3'terminus. GreA releases sequences of 2 to 3 nucleotides. The polypeptide is Transcription elongation factor GreA (Clostridium acetobutylicum (strain ATCC 824 / DSM 792 / JCM 1419 / IAM 19013 / LMG 5710 / NBRC 13948 / NRRL B-527 / VKM B-1787 / 2291 / W)).